Consider the following 147-residue polypeptide: MKNKMQLQFTARSRNESFARVRVAAFVAQLDPTLDELTGNQTVVSEAVTNAIIHGYEENPDGMVYVSAAICDDGTVEITVRDEGKGIADIEEARQPSFTTKPELERAGMGFTIMENFMDDVEIQSQQESGTIIRLKKHLALKNALCN.

This sequence belongs to the anti-sigma-factor family.

The enzyme catalyses L-seryl-[protein] + ATP = O-phospho-L-seryl-[protein] + ADP + H(+). It carries out the reaction L-threonyl-[protein] + ATP = O-phospho-L-threonyl-[protein] + ADP + H(+). Binds to sigma F and blocks its ability to form an RNA polymerase holoenzyme (E-sigma F). Phosphorylates SpoIIAA on a serine residue. This phosphorylation may enable SpoIIAA to act as an anti-anti-sigma factor that counteracts SpoIIAB and thus releases sigma F from inhibition. The sequence is that of Anti-sigma F factor from Heyndrickxia coagulans (Weizmannia coagulans).